Reading from the N-terminus, the 271-residue chain is Bis(5'-nucleosyl)-tetraphosphatase, symmetrical (271 aa).

It belongs to the Ap4A hydrolase family.

It catalyses the reaction P(1),P(4)-bis(5'-adenosyl) tetraphosphate + H2O = 2 ADP + 2 H(+). In terms of biological role, hydrolyzes diadenosine 5',5'''-P1,P4-tetraphosphate to yield ADP. The protein is Bis(5'-nucleosyl)-tetraphosphatase, symmetrical of Aliivibrio fischeri (strain MJ11) (Vibrio fischeri).